A 185-amino-acid polypeptide reads, in one-letter code: Ribosome-recycling factor (185 aa).

This sequence belongs to the RRF family.

It localises to the cytoplasm. In terms of biological role, responsible for the release of ribosomes from messenger RNA at the termination of protein biosynthesis. May increase the efficiency of translation by recycling ribosomes from one round of translation to another. The protein is Ribosome-recycling factor of Enterococcus faecalis (strain ATCC 700802 / V583).